We begin with the raw amino-acid sequence, 135 residues long: BolA-like protein 1 (135 aa).

Ser-81 carries the phosphoserine modification. Residues 114–135 (WKENPQLDTSPACLGGSKKSRN) form a disordered region.

The protein belongs to the BolA/IbaG family. In terms of assembly, interacts with GLRX5.

It localises to the mitochondrion. Functionally, acts as a mitochondrial iron-sulfur (Fe-S) cluster assembly factor that facilitates (Fe-S) cluster insertion into a subset of mitochondrial proteins. Probably acts together with the monothiol glutaredoxin GLRX5. May protect cells against oxidative stress. In Bos taurus (Bovine), this protein is BolA-like protein 1 (BOLA1).